Reading from the N-terminus, the 226-residue chain is Peroxynitrite isomerase (226 aa).

A GXWXGXG motif is present at residues G21–G27. H191 provides a ligand contact to heme b. The interval S201–S226 is disordered.

The protein belongs to the nitrobindin family. Homodimer. Requires heme b as cofactor.

The catalysed reaction is peroxynitrite = nitrate. It participates in nitrogen metabolism. Heme-binding protein able to scavenge peroxynitrite and to protect free L-tyrosine against peroxynitrite-mediated nitration, by acting as a peroxynitrite isomerase that converts peroxynitrite to nitrate. Therefore, this protein likely plays a role in peroxynitrite sensing and in the detoxification of reactive nitrogen and oxygen species (RNS and ROS, respectively). Is able to bind nitric oxide (NO) in vitro, but may act as a sensor of peroxynitrite levels in vivo. This Micrococcus luteus (strain ATCC 4698 / DSM 20030 / JCM 1464 / CCM 169 / CCUG 5858 / IAM 1056 / NBRC 3333 / NCIMB 9278 / NCTC 2665 / VKM Ac-2230) (Micrococcus lysodeikticus) protein is Peroxynitrite isomerase.